The following is a 334-amino-acid chain: Serine/threonine-protein kinase SAPK3 (334 aa).

The 257-residue stretch at 5 to 261 (YEALKELGAG…IPEIKKHTWF (257 aa)) folds into the Protein kinase domain. ATP is bound by residues 11–19 (LGAGNFGVA) and Lys34. The Proton acceptor role is filled by Asp124.

This sequence belongs to the protein kinase superfamily. Ser/Thr protein kinase family. In terms of processing, autophosphorylated in presence of Ca(2+). Expressed in leaves and maturing seeds, but not in roots and stems of field-grown plants.

It localises to the cytoplasm. The protein resides in the nucleus. It catalyses the reaction L-seryl-[protein] + ATP = O-phospho-L-seryl-[protein] + ADP + H(+). The catalysed reaction is L-threonyl-[protein] + ATP = O-phospho-L-threonyl-[protein] + ADP + H(+). Activated by phosphorylation. In terms of biological role, may play a role in signal transduction of hyperosmotic response. The polypeptide is Serine/threonine-protein kinase SAPK3 (SAPK3) (Oryza sativa subsp. indica (Rice)).